The primary structure comprises 236 residues: Small ribosomal subunit protein uS2c (236 aa).

Belongs to the universal ribosomal protein uS2 family.

The protein resides in the plastid. It is found in the chloroplast. The chain is Small ribosomal subunit protein uS2c (rps2) from Nandina domestica (Heavenly bamboo).